A 478-amino-acid chain; its full sequence is ATP synthase subunit beta (478 aa).

Position 164-171 (Gly164–Thr171) interacts with ATP.

It belongs to the ATPase alpha/beta chains family. F-type ATPases have 2 components, CF(1) - the catalytic core - and CF(0) - the membrane proton channel. CF(1) has five subunits: alpha(3), beta(3), gamma(1), delta(1), epsilon(1). CF(0) has three main subunits: a(1), b(2) and c(9-12). The alpha and beta chains form an alternating ring which encloses part of the gamma chain. CF(1) is attached to CF(0) by a central stalk formed by the gamma and epsilon chains, while a peripheral stalk is formed by the delta and b chains.

It localises to the cell membrane. The catalysed reaction is ATP + H2O + 4 H(+)(in) = ADP + phosphate + 5 H(+)(out). Its function is as follows. Produces ATP from ADP in the presence of a proton gradient across the membrane. The catalytic sites are hosted primarily by the beta subunits. This chain is ATP synthase subunit beta, found in Streptomyces coelicolor (strain ATCC BAA-471 / A3(2) / M145).